The following is a 670-amino-acid chain: Probable Na(+)/H(+) antiporter nhx-3 (670 aa).

8 consecutive transmembrane segments (helical) span residues 41-61, 73-93, 97-117, 129-149, 164-184, 192-212, 235-255, and 268-288; these read VYVI…FNLM, LLII…LSGV, SHAF…YFMP, LVFS…SLLI, EILV…IAIF, FLFI…VVLY, GLSF…FAIA, and ILAP…AEMV. N-linked (GlcNAc...) asparagine glycosylation occurs at Asn310. 4 helical membrane-spanning segments follow: residues 325-345, 351-371, 390-410, and 418-438; these read MLAQ…TLTS, FIFI…GIIV, FILS…VSIP, and MFIT…GITI. The interval 648 to 670 is disordered; sequence GDLKGHCGTSRKPKHSMFELRHV.

It belongs to the monovalent cation:proton antiporter 1 (CPA1) transporter (TC 2.A.36) family. Post-translationally, phosphorylated. As to expression, expressed in hypodermal cells of the main body syncytium, ut1 cells of the vulva and the spermathecal junction cell.

It localises to the endomembrane system. In terms of biological role, plays a role in epithelial membrane transport processes. The protein is Probable Na(+)/H(+) antiporter nhx-3 (nhx-3) of Caenorhabditis elegans.